A 190-amino-acid chain; its full sequence is CASP-like protein 1E1 (190 aa).

The disordered stretch occupies residues 1 to 21 (MEHESKTKMDGIEMEKGKKEN). At 1–28 (MEHESKTKMDGIEMEKGKKENGSRKGVE) the chain is on the cytoplasmic side. The chain crosses the membrane as a helical span at residues 29 to 49 (ITMRVLALVLTMVAATVLGVA). Residues 50-83 (KQTEVVPIKLIPTLPPLNVATTAKASYLSAFVYN) are Extracellular-facing. Residues 84–104 (ICANAIACGYTAISIMIVIIS) form a helical membrane-spanning segment. Over 105–111 (KGRRSKC) the chain is Cytoplasmic. Residues 112 to 132 (LLMAVLIGDLMMVALLCSSTG) traverse the membrane as a helical segment. Over 133–163 (AAGAIGLMGRHGNKHVMWKKVCGVFGKFCNQ) the chain is Extracellular. A helical membrane pass occupies residues 164–184 (AAVSVAITLIASVVFMLLVVL). Topologically, residues 185 to 190 (DALKLP) are cytoplasmic.

It belongs to the Casparian strip membrane proteins (CASP) family. As to quaternary structure, homodimer and heterodimers.

It is found in the cell membrane. This is CASP-like protein 1E1 from Arabidopsis lyrata subsp. lyrata (Lyre-leaved rock-cress).